The chain runs to 202 residues: Probable septum site-determining protein MinC (202 aa).

Belongs to the MinC family. Interacts with MinD and FtsZ.

Functionally, cell division inhibitor that blocks the formation of polar Z ring septums. Rapidly oscillates between the poles of the cell to destabilize FtsZ filaments that have formed before they mature into polar Z rings. Prevents FtsZ polymerization. The polypeptide is Probable septum site-determining protein MinC (Dictyoglomus turgidum (strain DSM 6724 / Z-1310)).